We begin with the raw amino-acid sequence, 400 residues long: Formate-dependent phosphoribosylglycinamide formyltransferase (400 aa).

Residues 22–23 (EL) and Glu82 each bind N(1)-(5-phospho-beta-D-ribosyl)glycinamide. ATP contacts are provided by residues Arg115, Lys157, 162 to 167 (SSGKGQ), 197 to 200 (EGFI), and Glu205. Residues 120 to 315 (RLAAETLGVP…EFELHARAIL (196 aa)) form the ATP-grasp domain. Residues Glu274 and Glu286 each coordinate Mg(2+). N(1)-(5-phospho-beta-D-ribosyl)glycinamide is bound by residues Asp293, Lys362, and 369–370 (RR).

It belongs to the PurK/PurT family. As to quaternary structure, homodimer.

The enzyme catalyses N(1)-(5-phospho-beta-D-ribosyl)glycinamide + formate + ATP = N(2)-formyl-N(1)-(5-phospho-beta-D-ribosyl)glycinamide + ADP + phosphate + H(+). The protein operates within purine metabolism; IMP biosynthesis via de novo pathway; N(2)-formyl-N(1)-(5-phospho-D-ribosyl)glycinamide from N(1)-(5-phospho-D-ribosyl)glycinamide (formate route): step 1/1. Its function is as follows. Involved in the de novo purine biosynthesis. Catalyzes the transfer of formate to 5-phospho-ribosyl-glycinamide (GAR), producing 5-phospho-ribosyl-N-formylglycinamide (FGAR). Formate is provided by PurU via hydrolysis of 10-formyl-tetrahydrofolate. This chain is Formate-dependent phosphoribosylglycinamide formyltransferase, found in Variovorax paradoxus (strain S110).